The following is an 857-amino-acid chain: Glucans biosynthesis glucosyltransferase H (857 aa).

Helical transmembrane passes span 141 to 158, 197 to 219, 514 to 536, 570 to 592, 605 to 627, and 681 to 703; these read YILL…GWYM, LILF…MGFL, AVFL…LVLS, VALF…ILIW, VTLS…MIFH, and SFLW…SVIS.

The protein belongs to the glycosyltransferase 2 family. OpgH subfamily.

The protein localises to the cell inner membrane. Its pathway is glycan metabolism; osmoregulated periplasmic glucan (OPG) biosynthesis. Involved in the biosynthesis of osmoregulated periplasmic glucans (OPGs). The protein is Glucans biosynthesis glucosyltransferase H of Pseudomonas putida (strain ATCC 47054 / DSM 6125 / CFBP 8728 / NCIMB 11950 / KT2440).